A 71-amino-acid polypeptide reads, in one-letter code: Small ribosomal subunit protein bS21 (71 aa).

The span at 48–59 shows a compositional bias: basic residues; the sequence is KAAAAVKRHAKK. Positions 48 to 71 are disordered; it reads KAAAAVKRHAKKVQRENRKFQRLY. The span at 60–71 shows a compositional bias: basic and acidic residues; that stretch reads VQRENRKFQRLY.

Belongs to the bacterial ribosomal protein bS21 family.

This Teredinibacter turnerae (strain ATCC 39867 / T7901) protein is Small ribosomal subunit protein bS21.